Reading from the N-terminus, the 291-residue chain is T-cell leukemia homeobox protein 3 (291 aa).

Residues 1 to 56 (MEAPASAQTPHPHEPISFGIDQILNSPDQDSAPAPRGPDGASYLGGPPGGRPGATY) are disordered. The segment at residues 166–225 (RKKPRTSFSRVQICELEKRFHRQKYLASAERAALAKSLKMTDAQVKTWFQNRRTKWRRQT) is a DNA-binding region (homeobox).

Its subcellular location is the nucleus. This chain is T-cell leukemia homeobox protein 3 (TLX3), found in Homo sapiens (Human).